The chain runs to 463 residues: MENSLKSSGKPLAAPKVGMVSLGCPKALVDSEQIITQLRAEGYEISGTYDGADLVVVNTCGFIDEAVQESLDAIGEALAENGKVIVTGCLGAKKSASGSGLIAEVHPKVLAVTGPHAVGEVMQAVHSHLPKPHDPFVDLVPAAGIKLTPRHYAYLKISEGCNHRCSFCIIPSMRGELVSRPVAEVMLEAENLFKSGVKELLVISQDTSAYGVDVKYRTGFWNGRPLKTRMTELVGALGELAAQYGAWVRLHYVYPYPHVDEIIPMMAQGPLKGHVLPYLDVPFQHAHPEVLKRMKRPANAERVLERVQKWREICPDLTIRSTFIAGFPGETDAQFETLLDFIRDAELDRVGCFAYSPVEGASANALDGALPDDVREARRARFMEVAEEVSAARIARKIGKTLKVLIDEVNAEGGIGRTAADAPEIDGVVYVEPAAKASKRYKVGEFVSVKITGADSHDLWGEV.

The 116-residue stretch at 15–130 folds into the MTTase N-terminal domain; the sequence is PKVGMVSLGC…VMQAVHSHLP (116 aa). [4Fe-4S] cluster is bound by residues cysteine 24, cysteine 60, cysteine 89, cysteine 161, cysteine 165, and cysteine 168. A Radical SAM core domain is found at 147-392; the sequence is LTPRHYAYLK…MEVAEEVSAA (246 aa). The region spanning 395–463 is the TRAM domain; that stretch reads ARKIGKTLKV…ADSHDLWGEV (69 aa).

The protein belongs to the methylthiotransferase family. RimO subfamily. [4Fe-4S] cluster serves as cofactor.

The protein resides in the cytoplasm. It carries out the reaction L-aspartate(89)-[ribosomal protein uS12]-hydrogen + (sulfur carrier)-SH + AH2 + 2 S-adenosyl-L-methionine = 3-methylsulfanyl-L-aspartate(89)-[ribosomal protein uS12]-hydrogen + (sulfur carrier)-H + 5'-deoxyadenosine + L-methionine + A + S-adenosyl-L-homocysteine + 2 H(+). Its function is as follows. Catalyzes the methylthiolation of an aspartic acid residue of ribosomal protein uS12. In Burkholderia pseudomallei (strain 668), this protein is Ribosomal protein uS12 methylthiotransferase RimO.